The chain runs to 362 residues: DNA replication and repair protein RecF (362 aa).

30-37 (GPNGSGKT) contributes to the ATP binding site.

Belongs to the RecF family.

The protein resides in the cytoplasm. In terms of biological role, the RecF protein is involved in DNA metabolism; it is required for DNA replication and normal SOS inducibility. RecF binds preferentially to single-stranded, linear DNA. It also seems to bind ATP. This is DNA replication and repair protein RecF from Proteus mirabilis (strain HI4320).